The following is a 780-amino-acid chain: Alpha-xylosidase (780 aa).

N-linked (GlcNAc...) asparagine glycosylation is found at Asn-48, Asn-84, Asn-247, and Asn-298. Residues Asp-434 and Glu-437 contribute to the active site. Asn-443 carries an N-linked (GlcNAc...) asparagine glycan. The active-site Proton donor is Asp-501. Asn-718 is a glycosylation site (N-linked (GlcNAc...) asparagine).

This sequence belongs to the glycosyl hydrolase 31 family.

The protein localises to the secreted. It catalyses the reaction Hydrolysis of terminal, non-reducing alpha-D-xylose residues with release of alpha-D-xylose.. Its function is as follows. Catalyzes the liberation of alpha-xylose from the non-reducing terminal glucose of xyloglucan oligosaccharides. The polypeptide is Alpha-xylosidase (Emericella nidulans (strain FGSC A4 / ATCC 38163 / CBS 112.46 / NRRL 194 / M139) (Aspergillus nidulans)).